The following is a 273-amino-acid chain: Proteasome subunit alpha (273 aa).

A disordered region spans residues 231-273 (DDGAAGQPPSSSDTDTSAAEARKPTASAGSADLEGPEPERPDS). Residues 238 to 249 (PPSSSDTDTSAA) are compositionally biased toward low complexity.

It belongs to the peptidase T1A family. The 20S proteasome core is composed of 14 alpha and 14 beta subunits that assemble into four stacked heptameric rings, resulting in a barrel-shaped structure. The two inner rings, each composed of seven catalytic beta subunits, are sandwiched by two outer rings, each composed of seven alpha subunits. The catalytic chamber with the active sites is on the inside of the barrel. Has a gated structure, the ends of the cylinder being occluded by the N-termini of the alpha-subunits. Is capped by the proteasome-associated ATPase, ARC.

Its subcellular location is the cytoplasm. It participates in protein degradation; proteasomal Pup-dependent pathway. The formation of the proteasomal ATPase ARC-20S proteasome complex, likely via the docking of the C-termini of ARC into the intersubunit pockets in the alpha-rings, may trigger opening of the gate for substrate entry. Interconversion between the open-gate and close-gate conformations leads to a dynamic regulation of the 20S proteasome proteolysis activity. In terms of biological role, component of the proteasome core, a large protease complex with broad specificity involved in protein degradation. The chain is Proteasome subunit alpha from Salinispora arenicola (strain CNS-205).